We begin with the raw amino-acid sequence, 395 residues long: Pesticidal crystal protein Cry6Ba (395 aa).

The protein belongs to the cry6A endotoxin family.

Functionally, endotoxin with nematicidal activity. The sequence is that of Pesticidal crystal protein Cry6Ba (cry6Ba) from Bacillus thuringiensis.